Consider the following 197-residue polypeptide: Probable UbiX-like flavin prenyltransferase (197 aa).

Residues 9–11, Ser36, 87–90, and Arg122 contribute to the FMN site; these read GAT and SMKT.

The protein belongs to the UbiX/PAD1 family. YclB subfamily. As to quaternary structure, homododecamer.

It catalyses the reaction dimethylallyl phosphate + FMNH2 = prenylated FMNH2 + phosphate. In terms of biological role, flavin prenyltransferase that catalyzes the synthesis of the prenylated FMN cofactor (prenyl-FMN) for phenolic acid decarboxylase C. Involved in the decarboxylation and detoxification of phenolic derivatives under both aerobic and anaerobic conditions. In Escherichia coli, this protein is Probable UbiX-like flavin prenyltransferase (ecdB).